Reading from the N-terminus, the 176-residue chain is Peptide deformylase (176 aa).

The Fe cation site is built by Cys97 and His139. The active site involves Glu140. His143 contacts Fe cation.

This sequence belongs to the polypeptide deformylase family. Fe(2+) is required as a cofactor.

It carries out the reaction N-terminal N-formyl-L-methionyl-[peptide] + H2O = N-terminal L-methionyl-[peptide] + formate. Removes the formyl group from the N-terminal Met of newly synthesized proteins. Requires at least a dipeptide for an efficient rate of reaction. N-terminal L-methionine is a prerequisite for activity but the enzyme has broad specificity at other positions. The protein is Peptide deformylase of Thermomicrobium roseum (strain ATCC 27502 / DSM 5159 / P-2).